The following is a 426-amino-acid chain: Actin-like protein 6B (426 aa).

Positions 39–82 (TTVGLLAAEEGGGLELEGDKEKKGKIFHIDTNALHVPRDGAEVM) are essential for mediating its function in dendritic development; may contribute to neuronal-specific targeting.

Belongs to the actin family. In terms of assembly, component of the multiprotein chromatin-remodeling complexes SWI/SNF: SWI/SNF-A (BAF), SWI/SNF-B (PBAF) and related complexes. The canonical complex contains a catalytic subunit (either SMARCA4/BRG1/BAF190A or SMARCA2/BRM/BAF190B) and at least SMARCE1, ACTL6A/BAF53, SMARCC1/BAF155, SMARCC2/BAF170 and SMARCB1/SNF5/BAF47. Other subunits specific to each of the complexes may also be present permitting several possible combinations developmentally and tissue specific. Component of the BAF complex, which includes at least actin (ACTB), ARID1A/BAF250A, ARID1B/BAF250B, SMARCA2/BRM, SMARCA4/BRG1/BAF190A, ACTL6A/BAF53, ACTL6B/BAF53B, SMARCE1/BAF57, SMARCC1/BAF155, SMARCC2/BAF170, SMARCB1/SNF5/INI1 and one or more SMARCD1/BAF60A, SMARCD2/BAF60B, or SMARCD3/BAF60C. Component of neuron-specific chromatin remodeling complex (nBAF complex) composed of at least, ARID1A/BAF250A or ARID1B/BAF250B, SMARCD1/BAF60A or SMARCD2/BAF60B or SMARCD3/BAF60C, SMARCA2/BRM/BAF190B, SMARCA4/BRG1/BAF190A, SMARCB1/BAF47, SMARCC1/BAF155, SMARCE1/BAF57, SMARCC2/BAF170, DPF1/BAF45B, DPF3/BAF45C, ACTL6B/BAF53B and actin (ACTB). Note that the nBAF complex is polymorphic in regard to the ATPase, SMARCA2 and SMARCA4 occupying mutually exclusive positions. May be a component of the SWI/SNF-B (PBAF) chromatin remodeling complex, at least composed of SMARCA4/BRG1, SMARCB1/BAF47/SNF5, ACTL6A/BAF53A or ACTL6B/BAF53B, SMARCE1/BAF57, SMARCD1/BAF60A, SMARCD2/BAF60B, perhaps SMARCD3/BAF60C, SMARCC1/BAF155, SMARCC2/BAF170, PBRM1/BAF180, ARID2/BAF200 and actin.

It is found in the nucleus. In terms of biological role, involved in transcriptional activation and repression of select genes by chromatin remodeling (alteration of DNA-nucleosome topology). Component of SWI/SNF chromatin remodeling complexes that carry out key enzymatic activities, changing chromatin structure by altering DNA-histone contacts within a nucleosome in an ATP-dependent manner. Belongs to the neuron-specific chromatin remodeling complex (nBAF complex), as such plays a role in remodeling mononucleosomes in an ATP-dependent fashion, and is required for postmitotic neural development and dendritic outgrowth. During neural development a switch from a stem/progenitor to a postmitotic chromatin remodeling mechanism occurs as neurons exit the cell cycle and become committed to their adult state. The transition from proliferating neural stem/progenitor cells to postmitotic neurons requires a switch in subunit composition of the npBAF and nBAF complexes. As neural progenitors exit mitosis and differentiate into neurons, npBAF complexes which contain ACTL6A/BAF53A and PHF10/BAF45A, are exchanged for homologous alternative ACTL6B/BAF53B and DPF1/BAF45B or DPF3/BAF45C subunits in neuron-specific complexes (nBAF). The npBAF complex is essential for the self-renewal/proliferative capacity of the multipotent neural stem cells. The nBAF complex along with CREST plays a role regulating the activity of genes essential for dendrite growth. ACTL6B/BAF53B is not essential for assembly of the nBAF complex but is required for targeting the complex and CREST to the promoter of genes essential for dendritic growth. Essential for neuronal maturation and dendrite development. The sequence is that of Actin-like protein 6B from Homo sapiens (Human).